The chain runs to 225 residues: UPF0758 protein NMC1174 (225 aa).

The MPN domain maps to 102-224 (VLSDPDTVAD…VRSFRQLGLM (123 aa)). Positions 173, 175, and 186 each coordinate Zn(2+). The JAMM motif signature appears at 173–186 (HNHPGGSPEPSQED).

Belongs to the UPF0758 family.

The sequence is that of UPF0758 protein NMC1174 from Neisseria meningitidis serogroup C / serotype 2a (strain ATCC 700532 / DSM 15464 / FAM18).